The primary structure comprises 654 residues: Translation factor GUF1, mitochondrial (654 aa).

Residues 57–237 (ENYRNFSIVA…SVIKNIPSPV (181 aa)) enclose the tr-type G domain. GTP-binding positions include 66-73 (AHVDHGKS), 130-134 (DTPGH), and 184-187 (NKID).

Belongs to the TRAFAC class translation factor GTPase superfamily. Classic translation factor GTPase family. LepA subfamily.

The protein resides in the mitochondrion inner membrane. The catalysed reaction is GTP + H2O = GDP + phosphate + H(+). In terms of biological role, promotes mitochondrial protein synthesis. May act as a fidelity factor of the translation reaction, by catalyzing a one-codon backward translocation of tRNAs on improperly translocated ribosomes. Binds to mitochondrial ribosomes in a GTP-dependent manner. This Candida dubliniensis (strain CD36 / ATCC MYA-646 / CBS 7987 / NCPF 3949 / NRRL Y-17841) (Yeast) protein is Translation factor GUF1, mitochondrial.